An 802-amino-acid polypeptide reads, in one-letter code: Receptor-type tyrosine-protein phosphatase alpha (802 aa).

Positions 1-19 (MDSWFILVLLGSGLICVSA) are cleaved as a signal peptide. Residues 20–151 (NNATTVAPSV…DSKDRRDETP (132 aa)) are Extracellular-facing. 2 N-linked (GlcNAc...) asparagine glycosylation sites follow: Asn21 and Asn36. Residues 39-59 (TAEPVKEEAKTSNPTSSLTSL) are disordered. N-linked (GlcNAc...) asparagine glycans are attached at residues Asn68, Asn80, Asn86, Asn104, and Asn124. Composition is skewed to polar residues over residues 79–115 (VNSS…QFTD) and 123–141 (GNSS…SGNS). The segment at 79 to 146 (VNSSDSDNGT…PSGNSDSKDR (68 aa)) is disordered. A helical membrane pass occupies residues 152 to 174 (IIAVMVALSSLLVIVFIIIVLYM). The Cytoplasmic portion of the chain corresponds to 175 to 802 (LRFKKYKQAG…DAFSDYANFK (628 aa)). A phosphoserine mark is found at Ser211 and Ser213. Tyrosine-protein phosphatase domains are found at residues 241–501 (FREE…LLEH) and 533–791 (LEEE…VQEY). Substrate contacts are provided by residues Asp410, 442-448 (CSAGVGR), and Gln486. Catalysis depends on Cys442, which acts as the Phosphocysteine intermediate. Cys732 (phosphocysteine intermediate) is an active-site residue. At Tyr798 the chain carries Phosphotyrosine.

This sequence belongs to the protein-tyrosine phosphatase family. Receptor class 4 subfamily. In terms of assembly, part of a complex comprised of PTPRA, BCAR1, BCAR3 (via SH2 domain), and SRC. Within the complex, interacts (when phosphorylated on Tyr-798) with BCAR3 (via SH2 domain). Interacts with GRB2. Post-translationally, integrin binding to extracellular matrix induces phosphorylation at Tyr-798 which induces PTPRA localization and recruitment of BCAR3, BCAR1 and CRK to focal adhesions.

It is found in the cell membrane. The protein resides in the cell junction. Its subcellular location is the focal adhesion. The catalysed reaction is O-phospho-L-tyrosyl-[protein] + H2O = L-tyrosyl-[protein] + phosphate. Functionally, tyrosine protein phosphatase which is involved in integrin-mediated focal adhesion formation. Following integrin engagement, specifically recruits BCAR3, BCAR1 and CRK to focal adhesions thereby promoting SRC-mediated phosphorylation of BRAC1 and the subsequent activation of PAK and small GTPase RAC1 and CDC42. The chain is Receptor-type tyrosine-protein phosphatase alpha (PTPRA) from Homo sapiens (Human).